The chain runs to 189 residues: Xanthine phosphoribosyltransferase (189 aa).

The xanthine site is built by leucine 20 and asparagine 27. Position 128–132 (128–132) interacts with 5-phospho-alpha-D-ribose 1-diphosphate; that stretch reads ANGEA. A xanthine-binding site is contributed by lysine 156.

It belongs to the purine/pyrimidine phosphoribosyltransferase family. Xpt subfamily. As to quaternary structure, homodimer.

The protein resides in the cytoplasm. The enzyme catalyses XMP + diphosphate = xanthine + 5-phospho-alpha-D-ribose 1-diphosphate. It functions in the pathway purine metabolism; XMP biosynthesis via salvage pathway; XMP from xanthine: step 1/1. Converts the preformed base xanthine, a product of nucleic acid breakdown, to xanthosine 5'-monophosphate (XMP), so it can be reused for RNA or DNA synthesis. This chain is Xanthine phosphoribosyltransferase, found in Lactobacillus delbrueckii subsp. bulgaricus (strain ATCC 11842 / DSM 20081 / BCRC 10696 / JCM 1002 / NBRC 13953 / NCIMB 11778 / NCTC 12712 / WDCM 00102 / Lb 14).